A 299-amino-acid chain; its full sequence is Putative transposase InsZ (299 aa).

A compositionally biased stretch (basic residues) spans 276–291; the sequence is PSRPRSVKISKTRYPV. The disordered stretch occupies residues 276–299; sequence PSRPRSVKISKTRYPVKHSAAPLK.

This Escherichia coli (strain K12) protein is Putative transposase InsZ (insZ).